Here is a 51-residue protein sequence, read N- to C-terminus: UPF0391 membrane protein PsycPRwf_2202 (51 aa).

Transmembrane regions (helical) follow at residues 6–26 (IIFA…VAGL) and 27–47 (SQNF…IGFI).

It belongs to the UPF0391 family.

It is found in the cell membrane. This is UPF0391 membrane protein PsycPRwf_2202 from Psychrobacter sp. (strain PRwf-1).